A 623-amino-acid polypeptide reads, in one-letter code: Heterogeneous nuclear ribonucleoprotein Q (623 aa).

Position 2 is an N-acetylalanine (Ala2). Ser159 carries the post-translational modification Phosphoserine. RRM domains lie at 162 to 241 (TEIF…ISVA), 243 to 325 (NRLF…WADP), and 338 to 408 (KVLF…FAKP). Lys168 participates in a covalent cross-link: Glycyl lysine isopeptide (Lys-Gly) (interchain with G-Cter in SUMO2). Position 221 is an N6-acetyllysine (Lys221). Lys363 carries the post-translational modification N6-acetyllysine. Tyr373 bears the Phosphotyrosine mark. The interval 400-561 (NIEIVFAKPP…GARGGRGGNV (162 aa)) is interaction with APOBEC1. Arg444 is modified (asymmetric dimethylarginine; by PRMT1; alternate). Arg444 is modified (omega-N-methylarginine; by PRMT1; alternate). A run of 6 repeats spans residues 448–450 (RGG), 451–453 (RGG), 460–464 (YYGYE), 469–472 (YYGY), 478–480 (RGG), and 485–488 (YYGY). The segment at 448–559 (RGGRGGYGYP…VRGARGGRGG (112 aa)) is 8 X 3 AA repeats of R-G-G. Residues 460-488 (YYGYEDYYDYYGYDYHNYRGGYEDPYYGY) form a 3 X 4 AA repeats of Y-Y-G-Y region. An Omega-N-methylarginine; by PRMT1 modification is found at Arg496. Residues 497 to 623 (GRGGRGARGA…YQDTFGQQWK (127 aa)) form a disordered region. The stretch at 498–500 (RGG) is one 1-4 repeat. The span at 504-522 (RGAAPSRGRGAAPPRGRAG) shows a compositional bias: low complexity. An Asymmetric dimethylarginine; by PRMT1 modification is found at Arg510. Arg518, Arg526, Arg536, and Arg539 each carry asymmetric dimethylarginine; by PRMT1; alternate. An omega-N-methylarginine; by PRMT1; alternate mark is found at Arg518, Arg526, Arg536, and Arg539. The interval 518-549 (RGRAGYSQRGGPGSARGVRGARGGAQQQRGRG) is interaction with SMN. One copy of the 1-5 repeat lies at 526 to 528 (RGG). 3 tandem repeats follow at residues 539 to 541 (RGG), 554 to 556 (RGG), and 557 to 559 (RGG). Over residues 550-562 (VRGARGGRGGNVG) the composition is skewed to gly residues. The Bipartite nuclear localization signal motif lies at 564 to 578 (KRKADGYNQPDSKRR). The span at 580–595 (TNNQNWGSQPIAQQPL) shows a compositional bias: polar residues. At Ser587 the chain carries Phosphoserine. Lys607 participates in a covalent cross-link: Glycyl lysine isopeptide (Lys-Gly) (interchain with G-Cter in SUMO2). The span at 611 to 623 (QEFYQDTFGQQWK) shows a compositional bias: polar residues.

As to quaternary structure, isoform 1 is a component of the APOB mRNA editosome complex and interacts with APOBEC1 and A1CF (APOBEC1 complementation factor). Part of a complex associated with the FOS mCRD domain and consisting of PABPC1, PAIP1, CSDE1/UNR, HNRPD and SYNCRIP. Isoform 3 interacts with HNRPR. Interacts with POLR2A hyperphosphorylated C-terminal domain. Isoform 1, isoform 2 and isoform 3 interact with SMN. Isoform 3 interacts through its C-terminal domain with SYT7, SYT8 and SYT9. The non-phosphorylated and phosphorylated forms are colocalized with PAIP1 in polysomes. Interacts with HABP4. Identified in a histone pre-mRNA complex, at least composed of ERI1, LSM11, SLBP, SNRPB, SYNCRIP and YBX1. Identified in the spliceosome C complex. Component of the coding region determinant (CRD)-mediated complex, composed of DHX9, HNRNPU, IGF2BP1, SYNCRIP and YBX1. Identified in a mRNP complex, at least composed of DHX9, DDX3X, ELAVL1, HNRNPU, IGF2BP1, ILF3, PABPC1, PCBP2, PTBP2, STAU1, STAU2, SYNCRIP and YBX1. Identified in a mRNP granule complex, at least composed of ACTB, ACTN4, DHX9, ERG, HNRNPA1, HNRNPA2B1, HNRNPAB, HNRNPD, HNRNPL, HNRNPR, HNRNPU, HSPA1, HSPA8, IGF2BP1, ILF2, ILF3, NCBP1, NCL, PABPC1, PABPC4, PABPN1, RPLP0, RPS3, RPS3A, RPS4X, RPS8, RPS9, SYNCRIP, YBX1 and untranslated mRNAs. Interacts with GTPBP1. Component of the GAIT complex; in humans the complex assembly seems to be a two-step process in which EPRS1 first associates with SYNCRIP to form a pre-GAIT complex which is deficient in GAIT element binding. (Microbial infection) Interacts with minute virus of mice (MVM) NS1 protein. In terms of assembly, (Microbial infection) Interacts with herpes virus 8/HHV-8 protein vIRF-1; this interaction induces ubiquitination and degradation of SYNCRIP. Phosphorylated on tyrosine. The membrane-bound form found in microsomes is phosphorylated in vitro by insulin receptor tyrosine kinase (INSR). Phosphorylation is inhibited upon binding to RNA, whereas the cytoplasmic form is poorly phosphorylated. Ubiquitously expressed. Detected in heart, brain, pancreas, placenta, spleen, lung, liver, skeletal muscle, kidney, thymus, prostate, uterus, small intestine, colon, peripheral blood and testis.

The protein localises to the cytoplasm. It localises to the microsome. It is found in the endoplasmic reticulum. Its subcellular location is the nucleus. The protein resides in the nucleoplasm. Heterogenous nuclear ribonucleoprotein (hnRNP) implicated in mRNA processing mechanisms. Component of the CRD-mediated complex that promotes MYC mRNA stability. Isoform 1, isoform 2 and isoform 3 are associated in vitro with pre-mRNA, splicing intermediates and mature mRNA protein complexes. Isoform 1 binds to apoB mRNA AU-rich sequences. Isoform 1 is part of the APOB mRNA editosome complex and may modulate the postranscriptional C to U RNA-editing of the APOB mRNA through either by binding to A1CF (APOBEC1 complementation factor), to APOBEC1 or to RNA itself. May be involved in translationally coupled mRNA turnover. Implicated with other RNA-binding proteins in the cytoplasmic deadenylation/translational and decay interplay of the FOS mRNA mediated by the major coding-region determinant of instability (mCRD) domain. Interacts in vitro preferentially with poly(A) and poly(U) RNA sequences. Isoform 3 may be involved in cytoplasmic vesicle-based mRNA transport through interaction with synaptotagmins. Component of the GAIT (gamma interferon-activated inhibitor of translation) complex which mediates interferon-gamma-induced transcript-selective translation inhibition in inflammation processes. Upon interferon-gamma activation assembles into the GAIT complex which binds to stem loop-containing GAIT elements in the 3'-UTR of diverse inflammatory mRNAs (such as ceruplasmin) and suppresses their translation; seems not to be essential for GAIT complex function. The polypeptide is Heterogeneous nuclear ribonucleoprotein Q (SYNCRIP) (Homo sapiens (Human)).